We begin with the raw amino-acid sequence, 125 residues long: MKRLLSWLTGLVVIAGLLIGLLVPPSVSAAEIRNVADDKLAERGDKVDLNNSSVRRFQQFPGMYPTFAGKIVLGGPYENVDDVLKLDLSERQKELFEKYRDNFVVTAPSIALNEGFDRINDGQFR.

The N-terminal stretch at Met1–Ala29 is a signal peptide.

Belongs to the PsbU family. In terms of assembly, PSII is composed of 1 copy each of membrane proteins PsbA, PsbB, PsbC, PsbD, PsbE, PsbF, PsbH, PsbI, PsbJ, PsbK, PsbL, PsbM, PsbT, PsbX, PsbY, PsbZ, Psb30/Ycf12, peripheral proteins PsbO, CyanoQ (PsbQ), PsbU, PsbV and a large number of cofactors. It forms dimeric complexes.

Its subcellular location is the cellular thylakoid membrane. Its function is as follows. One of the extrinsic, lumenal subunits of photosystem II (PSII). PSII is a light-driven water plastoquinone oxidoreductase, using light energy to abstract electrons from H(2)O, generating a proton gradient subsequently used for ATP formation. The extrinsic proteins stabilize the structure of photosystem II oxygen-evolving complex (OEC), the ion environment of oxygen evolution and protect the OEC against heat-induced inactivation. This is Photosystem II extrinsic protein U from Synechococcus sp. (strain CC9311).